Here is a 977-residue protein sequence, read N- to C-terminus: Monofunctional C1-tetrahydrofolate synthase, mitochondrial (977 aa).

The N-terminal 31 residues, 1–31 (MSVRLPLLLRQLGRQQLPSGPACRLRELCRS), are a transit peptide targeting the mitochondrion. Positions 29–71 (CRSGSRSSSSGGGDPEGLRGRRLQDGQTFSSHGPGNPEAPGMD) are disordered. Residues 32-347 (GSRSSSSGGG…REQQHRRWRL (316 aa)) form a methylenetetrahydrofolate dehydrogenase and cyclohydrolase region. Lysine 188 carries the post-translational modification N6-acetyllysine; alternate. Lysine 188 is subject to N6-succinyllysine; alternate. The formyltetrahydrofolate synthetase stretch occupies residues 348 to 977 (HCLKLQPLSP…TETEQVKGLF (630 aa)). At serine 356 the chain carries Phosphoserine. 422-429 (TPLGEGKS) lines the ATP pocket. Lysine 595 is subject to N6-succinyllysine.

In the N-terminal section; belongs to the tetrahydrofolate dehydrogenase/cyclohydrolase family. The protein in the C-terminal section; belongs to the formate--tetrahydrofolate ligase family. Homodimer.

The protein localises to the mitochondrion. It catalyses the reaction (6S)-5,6,7,8-tetrahydrofolate + formate + ATP = (6R)-10-formyltetrahydrofolate + ADP + phosphate. It participates in one-carbon metabolism; tetrahydrofolate interconversion. Its function is as follows. May provide the missing metabolic reaction required to link the mitochondria and the cytoplasm in the mammalian model of one-carbon folate metabolism complementing thus the enzymatic activities of MTHFD2. The sequence is that of Monofunctional C1-tetrahydrofolate synthase, mitochondrial (Mthfd1l) from Mus musculus (Mouse).